A 2196-amino-acid chain; its full sequence is Non-reducing polyketide synthase CTB1 (2196 aa).

Residues 11–250 form an N-terminal acylcarrier protein transacylase domain (SAT) region; the sequence is AFGDQTYDCS…TRLPITAPYH (240 aa). Positions 381–814 constitute a Ketosynthase family 3 (KS3) domain; sequence KSPIAILAAS…GGNTCLVLED (434 aa). Residues Cys-553, His-688, and His-733 each act as for beta-ketoacyl synthase activity in the active site. Positions 922–1223 are malonyl-CoA:ACP transacylase (MAT) domain; that stretch reads AFTGQGSAFA…QTFASINKDK (302 aa). Positions 1298–1611 are product template (PT) domain; that stretch reads SSSIHKVITN…VPKRLMHYIV (314 aa). The interval 1302-1441 is N-terminal hotdog fold; it reads HKVITNTITA…EKTALKSAAL (140 aa). The region spanning 1302 to 1608 is the PKS/mFAS DH domain; the sequence is HKVITNTITA…LQGVPKRLMH (307 aa). The active-site Proton acceptor; for dehydratase activity is the His-1335. Positions 1460-1608 are C-terminal hotdog fold; the sequence is TYRFSKGMIY…LQGVPKRLMH (149 aa). The active-site Proton donor; for dehydratase activity is Asp-1520. Residues 1617–1666 form a disordered region; the sequence is KASGPPTEKKTSSPPVEKKASAPVAPTRPAIQRKNASIPPPATQVTPQNK. Positions 1623-1636 are enriched in basic and acidic residues; the sequence is TEKKTSSPPVEKKA. Carrier domains lie at 1671-1748 and 1775-1857; these read PSVS…TRLS and DPSP…SGST. O-(pantetheine 4'-phosphoryl)serine occurs at positions 1708 and 1816. Over residues 1856–1867 the composition is skewed to polar residues; sequence STESFDSTTTKP. The tract at residues 1856 to 1923 is disordered; the sequence is STESFDSTTT…PPKGRIPPAW (68 aa). Over residues 1872-1887 the composition is skewed to low complexity; sequence ATPPLTDSSASSPPSS. The thioesterase (TE) domain stretch occupies residues 1937–2187; that stretch reads ILFLFPDGAG…SGAQMLVEHM (251 aa).

Pantetheine 4'-phosphate is required as a cofactor.

The enzyme catalyses 6 malonyl-CoA + acetyl-CoA + 6 H(+) = nor-toralactone + 6 CO2 + 7 CoA + 2 H2O. Its pathway is mycotoxin biosynthesis. In terms of biological role, polyketide synthase; part of the gene cluster that mediates the biosynthesis of cercosporin, a light-activated, non-host-selective toxin. The perylenequinone chromophore of cercosporin absorbs light energy to attain an electronically-activated triplet state and produces active oxygen species such as the hydroxyl radical, superoxide, hydrogen peroxide or singlet oxygen upon reaction with oxygen molecules. These reactive oxygen species cause damage to various cellular components including lipids, proteins and nucleic acids. The first step of cercosporin biosynthesis is performed by the polyketide synthase CTB1 which catalyzes the formation of nor-toralactone. The starter unit acyltransferase (SAT) domain of CTB1 initiates polyketide extension by the selective utilization of acetyl-CoA, which is elongated to the heptaketide in the beta-ketoacyl synthase (KS) domain by successive condensations with six malonyl units introduced by the malonyl acyltransferase (MAT) domain. The product template (PT) domain catalyzes C4-C9 and C2-C11 aldol cyclizations and dehydrations to a trihydroxynaphthalene, which is thought to be delivered to the thioesterase (TE) domain for product release. The bifunctional enzyme CTB3 then methylates nor-toralactone to toralactone before conducting an unusual oxidative aromatic ring opening. The O-methyltransferase CTB2 further methylates the nascent OH-6 of the CBT3 product, blocking further oxidation at this site before the reductase CTB6 reduces the 2-oxopropyl ketone at position C7, giving naphthalene. The FAD-dependent monooxygenase CTB5 in concert with the multicopper oxidase CTB12 are responsible for homodimerization of naphthalene with CTB7 installing the dioxepine moiety, finally producing cercosporin. The fasciclin domain-containing protein CTB11 might act with CTB5 and CTB12 whereas the roles of CTB9 and CTB10 have still to be elucidated. In Cercospora nicotianae (Barn spot disease fungus), this protein is Non-reducing polyketide synthase CTB1.